We begin with the raw amino-acid sequence, 344 residues long: 4-dimethylallyltryptophan N-methyltransferase easF (344 aa).

This sequence belongs to the methyltransferase superfamily. Homodimer.

The catalysed reaction is 4-(3-methylbut-2-enyl)-L-tryptophan + S-adenosyl-L-methionine = 4-(3-methylbut-2-enyl)-L-abrine + S-adenosyl-L-homocysteine + H(+). Its pathway is alkaloid biosynthesis; ergot alkaloid biosynthesis. Its function is as follows. 4-dimethylallyltryptophan N-methyltransferase; part of the gene cluster that mediates the biosynthesis of fungal ergot alkaloid. DmaW catalyzes the first step of ergot alkaloid biosynthesis by condensing dimethylallyl diphosphate (DMAP) and tryptophan to form 4-dimethylallyl-L-tryptophan. The second step is catalyzed by the methyltransferase easF that methylates 4-dimethylallyl-L-tryptophan in the presence of S-adenosyl-L-methionine, resulting in the formation of 4-dimethylallyl-L-abrine. The catalase easC and the FAD-dependent oxidoreductase easE then transform 4-dimethylallyl-L-abrine to chanoclavine-I which is further oxidized by easD in the presence of NAD(+), resulting in the formation of chanoclavine-I aldehyde. Agroclavine dehydrogenase easG then mediates the conversion of chanoclavine-I aldehyde to agroclavine via a non-enzymatic adduct reaction: the substrate is an iminium intermediate that is formed spontaneously from chanoclavine-I aldehyde in the presence of glutathione. The presence of easA is not required to complete this reaction. Further conversion of agroclavine to paspalic acid is a two-step process involving oxidation of agroclavine to elymoclavine and of elymoclavine to paspalic acid, the second step being performed by the elymoclavine oxidase cloA. Paspalic acid is then further converted to D-lysergic acid. Ergopeptines are assembled from D-lysergic acid and three different amino acids by the D-lysergyl-peptide-synthetases composed each of a monomudular and a trimodular nonribosomal peptide synthetase subunit. LpsB and lpsC encode the monomodular subunits responsible for D-lysergic acid activation and incorporation into the ergopeptine backbone. LpsA1 and A2 subunits encode the trimodular nonribosomal peptide synthetase assembling the tripeptide portion of ergopeptines. LpsA1 is responsible for formation of the major ergopeptine, ergotamine, and lpsA2 for alpha-ergocryptine, the minor ergopeptine of the total alkaloid mixture elaborated by C.purpurea. D-lysergyl-tripeptides are assembled by the nonribosomal peptide synthetases and released as N-(D-lysergyl-aminoacyl)-lactams. Cyclolization of the D-lysergyl-tripeptides is performed by the Fe(2+)/2-ketoglutarate-dependent dioxygenase easH which introduces a hydroxyl group into N-(D-lysergyl-aminoacyl)-lactam at alpha-C of the aminoacyl residue followed by spontaneous condensation with the terminal lactam carbonyl group. In Claviceps purpurea (Ergot fungus), this protein is 4-dimethylallyltryptophan N-methyltransferase easF.